The chain runs to 244 residues: 7-cyano-7-deazaguanine synthase (244 aa).

14–24 is an ATP binding site; sequence FSGGQDSATCL. 4 residues coordinate Zn(2+): Cys-202, Cys-217, Cys-220, and Cys-223.

It belongs to the QueC family. Zn(2+) serves as cofactor.

It catalyses the reaction 7-carboxy-7-deazaguanine + NH4(+) + ATP = 7-cyano-7-deazaguanine + ADP + phosphate + H2O + H(+). Its pathway is purine metabolism; 7-cyano-7-deazaguanine biosynthesis. Functionally, catalyzes the ATP-dependent conversion of 7-carboxy-7-deazaguanine (CDG) to 7-cyano-7-deazaguanine (preQ(0)). This is 7-cyano-7-deazaguanine synthase from Paraburkholderia phytofirmans (strain DSM 17436 / LMG 22146 / PsJN) (Burkholderia phytofirmans).